Reading from the N-terminus, the 178-residue chain is Large ribosomal subunit protein uL6 (178 aa).

It belongs to the universal ribosomal protein uL6 family. Part of the 50S ribosomal subunit.

Its function is as follows. This protein binds to the 23S rRNA, and is important in its secondary structure. It is located near the subunit interface in the base of the L7/L12 stalk, and near the tRNA binding site of the peptidyltransferase center. The sequence is that of Large ribosomal subunit protein uL6 from Clavibacter sepedonicus (Clavibacter michiganensis subsp. sepedonicus).